Here is a 545-residue protein sequence, read N- to C-terminus: CTP synthase (545 aa).

The tract at residues 1–266 (MTTNYIFVTG…DDYICKRFSL (266 aa)) is amidoligase domain. S14 serves as a coordination point for CTP. S14 contacts UTP. Residues 15–20 (SLGKGI) and D72 contribute to the ATP site. Positions 72 and 140 each coordinate Mg(2+). CTP is bound by residues 147 to 149 (DIE), 187 to 192 (KTKPTQ), and K223. UTP-binding positions include 187-192 (KTKPTQ) and K223. 239–241 (KDV) is a binding site for ATP. In terms of domain architecture, Glutamine amidotransferase type-1 spans 291 to 542 (NIGMVGKYVE…VKAASEYQKR (252 aa)). Residue G352 participates in L-glutamine binding. The Nucleophile; for glutamine hydrolysis role is filled by C379. Residues 380–383 (LGMQ), E403, and R470 each bind L-glutamine. Catalysis depends on residues H515 and E517.

The protein belongs to the CTP synthase family. As to quaternary structure, homotetramer.

It catalyses the reaction UTP + L-glutamine + ATP + H2O = CTP + L-glutamate + ADP + phosphate + 2 H(+). The catalysed reaction is L-glutamine + H2O = L-glutamate + NH4(+). The enzyme catalyses UTP + NH4(+) + ATP = CTP + ADP + phosphate + 2 H(+). It functions in the pathway pyrimidine metabolism; CTP biosynthesis via de novo pathway; CTP from UDP: step 2/2. With respect to regulation, allosterically activated by GTP, when glutamine is the substrate; GTP has no effect on the reaction when ammonia is the substrate. The allosteric effector GTP functions by stabilizing the protein conformation that binds the tetrahedral intermediate(s) formed during glutamine hydrolysis. Inhibited by the product CTP, via allosteric rather than competitive inhibition. In terms of biological role, catalyzes the ATP-dependent amination of UTP to CTP with either L-glutamine or ammonia as the source of nitrogen. Regulates intracellular CTP levels through interactions with the four ribonucleotide triphosphates. The polypeptide is CTP synthase (Erwinia tasmaniensis (strain DSM 17950 / CFBP 7177 / CIP 109463 / NCPPB 4357 / Et1/99)).